We begin with the raw amino-acid sequence, 264 residues long: Acyl-[acyl-carrier-protein]--UDP-N-acetylglucosamine O-acyltransferase (264 aa).

It belongs to the transferase hexapeptide repeat family. LpxA subfamily. Homotrimer.

It localises to the cytoplasm. The enzyme catalyses a (3R)-hydroxyacyl-[ACP] + UDP-N-acetyl-alpha-D-glucosamine = a UDP-3-O-[(3R)-3-hydroxyacyl]-N-acetyl-alpha-D-glucosamine + holo-[ACP]. It participates in glycolipid biosynthesis; lipid IV(A) biosynthesis; lipid IV(A) from (3R)-3-hydroxytetradecanoyl-[acyl-carrier-protein] and UDP-N-acetyl-alpha-D-glucosamine: step 1/6. In terms of biological role, involved in the biosynthesis of lipid A, a phosphorylated glycolipid that anchors the lipopolysaccharide to the outer membrane of the cell. This Rickettsia prowazekii (strain Madrid E) protein is Acyl-[acyl-carrier-protein]--UDP-N-acetylglucosamine O-acyltransferase.